We begin with the raw amino-acid sequence, 464 residues long: MSTAALVEGKIVQCIGAVIDVEFPRDSMPKIYDALILDGSELTLEVQQQLGDGVVRTICLGASDGLRRGLTVKNTAKPISVPVGKPTLGRIMDVLGRPIDEAGPIESETTRSIHQKAPAFDELSPSTELLETGIKVIDLICPFAKGGKVGLFGGAGVGKTVNMMELINNIAKEHGGYSVFAGVGERTREGNDFYHEMKDSNVLDKVALVYGQMNEPPGNRLRVALTGLTMAEHFRDEGLDVLFFVDNIYRFTLAGTEVSALLGRMPSAVGYQPTLAEEMGKLQERITSTKKGSITSVQAVYVPADDLTDPSPATTFGHLDATVVLSRDIASLGIYPAVDPLDSTSRQIDPNVIGEEHYSITRRVQQTLQRYKELRDIIAILGMDELSPEDKLSVARARKIQRFLSQPFHVAEVFTGSPGKYVPLKETIRGFKMIVDGECDHLPEQAFYMVGTIDEAFEKAKKIS.

153 to 160 is a binding site for ATP; the sequence is GGAGVGKT.

This sequence belongs to the ATPase alpha/beta chains family. As to quaternary structure, F-type ATPases have 2 components, CF(1) - the catalytic core - and CF(0) - the membrane proton channel. CF(1) has five subunits: alpha(3), beta(3), gamma(1), delta(1), epsilon(1). CF(0) has three main subunits: a(1), b(2) and c(9-12). The alpha and beta chains form an alternating ring which encloses part of the gamma chain. CF(1) is attached to CF(0) by a central stalk formed by the gamma and epsilon chains, while a peripheral stalk is formed by the delta and b chains.

The protein localises to the cell inner membrane. It carries out the reaction ATP + H2O + 4 H(+)(in) = ADP + phosphate + 5 H(+)(out). Its function is as follows. Produces ATP from ADP in the presence of a proton gradient across the membrane. The catalytic sites are hosted primarily by the beta subunits. In Burkholderia lata (strain ATCC 17760 / DSM 23089 / LMG 22485 / NCIMB 9086 / R18194 / 383), this protein is ATP synthase subunit beta.